The sequence spans 411 residues: Coiled-coil domain-containing protein 159 (411 aa).

Positions 84–113 (EQAGKSGAWEKEWDSEPQPHEGTPCSSSDV) are disordered. A compositionally biased stretch (basic and acidic residues) spans 91–102 (AWEKEWDSEPQP). The stretch at 269-305 (EELELVREEVTFIYQKLQDQEDEISENLLNIQKMQKT) forms a coiled coil. The disordered stretch occupies residues 372–411 (RASSLRGQKGHQCKSSQCPSWDSDSDWERPFSKSGSYPPA). Polar residues predominate over residues 384 to 393 (CKSSQCPSWD).

Interacts with DYNLT2. Interacts with GGNBP1. Interacts with OSBP2. As to expression, expressed in spermatids but undetectable in the spermatozoon (at protein level). Highly expressed in the testis (at protein level).

Functions during spermatid development; may participate in the centrosome reduction procedure of spermatids and is required for the formation of the connecting piece/sperm head-tail coupling apparatus (HTCA) and the correct and tight attachment of the flagellum to the nuclear envelope. The chain is Coiled-coil domain-containing protein 159 (Ccdc159) from Mus musculus (Mouse).